Consider the following 380-residue polypeptide: Cytochrome b (380 aa).

The next 4 membrane-spanning stretches (helical) occupy residues 33–53 (FGSL…FLAM), 77–98 (WLIR…YLHI), 113–133 (WNVG…GYVL), and 178–198 (FFAF…IHLL). Heme b is bound by residues H83 and H97. Residues H182 and H196 each coordinate heme b. H201 serves as a coordination point for a ubiquinone. 4 helical membrane passes run 226 to 246 (YKDL…ALFS), 288 to 308 (LGGV…PILH), 320 to 340 (ITQF…WIGG), and 347 to 367 (FIII…VLTP).

It belongs to the cytochrome b family. In terms of assembly, the cytochrome bc1 complex contains 3 respiratory subunits (MT-CYB, CYC1 and UQCRFS1), 2 core proteins (UQCRC1 and UQCRC2) and probably 6 low-molecular weight proteins. Heme b serves as cofactor.

Its subcellular location is the mitochondrion inner membrane. Component of the ubiquinol-cytochrome c reductase complex (complex III or cytochrome b-c1 complex) that is part of the mitochondrial respiratory chain. The b-c1 complex mediates electron transfer from ubiquinol to cytochrome c. Contributes to the generation of a proton gradient across the mitochondrial membrane that is then used for ATP synthesis. The sequence is that of Cytochrome b (mt-cyb) from Dactyloptena peterseni (Starry flying gurnard).